The primary structure comprises 121 residues: Large ribosomal subunit protein bL12 (121 aa).

The protein belongs to the bacterial ribosomal protein bL12 family. As to quaternary structure, homodimer. Part of the ribosomal stalk of the 50S ribosomal subunit. Forms a multimeric L10(L12)X complex, where L10 forms an elongated spine to which 2 to 4 L12 dimers bind in a sequential fashion. Binds GTP-bound translation factors.

Functionally, forms part of the ribosomal stalk which helps the ribosome interact with GTP-bound translation factors. Is thus essential for accurate translation. This is Large ribosomal subunit protein bL12 from Streptococcus agalactiae serotype V (strain ATCC BAA-611 / 2603 V/R).